A 62-amino-acid polypeptide reads, in one-letter code: Large ribosomal subunit protein bL33 (62 aa).

It belongs to the bacterial ribosomal protein bL33 family.

This is Large ribosomal subunit protein bL33 from Porphyromonas gingivalis (strain ATCC 33277 / DSM 20709 / CIP 103683 / JCM 12257 / NCTC 11834 / 2561).